A 907-amino-acid polypeptide reads, in one-letter code: MGQSSVAQFASELGLPAELLLEQLRGAGVNKTAYDDVLTEQDKTSLLEYLRKEHGVQEPKNKITLTRKQVTEIKKSDSSGKARTIQVEVRKKRVLVRRDPALEPVVAEESAEIAPAAVIDEPTLQAAPVVLPEPEPVVEAVPEPVAVEQELESEPEPTVAPAEPEAGEVAVAVDEKPTADARPKLTARELLGAEELALREREAKRQAALMAIQAEELRKKQELAQRRQEEAKRAAEAAANKLSEGTLHKPVAKEAPKPEEKNAKKTGKSGGKDWNDSDGKKRGGVKGRSDAGVAGQGWRAKGSKSKSKNNENQQHAFTAPTEPIVHDVLVPETITVGDLAHKMAVKASEVIKTLMKMGMMVTINQVLDQETAIIIVEEMGHNAKAAASNDPEAFLDEAEHAEAVQEPRPPVVTVMGHVDHGKTSLLDYIRRSRVASGEAGGITQHIGAYHVETPRGMVTFLDTPGHEAFTAMRARGAKATDVVILVVAADDGVMPQTIEAVHHAKAANVPIVVAVNKIDKPEANPERVKQELVSHEVVPEDWGGDTMFVEVSAKTGAGIDNLLEAVLLQAEVLELKAPKNIPAKGLVIEGRLDKGRGPVSTILVQSGTLQRGDMILAGTAYGRVRAMLDESGRDVKEAGPSIPVEILGLSDVPSAGEEVIVLNDERKAREIALFRQGKFRDVKLAKQQAAKLESMFEQMGEGEVKVLHLIIKSDVQGSYEALSTSLQKLSTDEVKVNIIHTGVGAISESDVNLAAASKAVLIGFNVRADAGARKLIESTGVDVRYYNIIYEAVDEVKAALGGMLSPEQKENVIGTVEIREVFRISKVGSVAGCYVQDGVVRRNSKVRLIRDNVVIHTGELDSLKRFKDDVKEVKSNFECGLSLKNYNEIEVGDILEVFEVVEVARTL.

Basic and acidic residues-rich tracts occupy residues L223–A235, V251–A263, and G270–K281. Residues L223–P320 are disordered. One can recognise a tr-type G domain in the interval P407–K576. Residues G416–T423 are G1. Position 416–423 (G416–T423) interacts with GTP. Residues G441–H445 form a G2 region. The G3 stretch occupies residues D462–G465. GTP contacts are provided by residues D462–H466 and N516–D519. The interval N516–D519 is G4. The segment at S552–K554 is G5.

This sequence belongs to the TRAFAC class translation factor GTPase superfamily. Classic translation factor GTPase family. IF-2 subfamily.

The protein resides in the cytoplasm. Its function is as follows. One of the essential components for the initiation of protein synthesis. Protects formylmethionyl-tRNA from spontaneous hydrolysis and promotes its binding to the 30S ribosomal subunits. Also involved in the hydrolysis of GTP during the formation of the 70S ribosomal complex. In Methylobacillus flagellatus (strain ATCC 51484 / DSM 6875 / VKM B-1610 / KT), this protein is Translation initiation factor IF-2.